The chain runs to 444 residues: ATP-dependent protease ATPase subunit HslU (444 aa).

Residues Ile20 and 62-67 (GVGKTE) each bind ATP. Positions 130–158 (EDRILDALVPPPRGASGEPERGEDNSARQ) are disordered. ATP is bound by residues Asp257, Glu322, and Arg394.

Belongs to the ClpX chaperone family. HslU subfamily. As to quaternary structure, a double ring-shaped homohexamer of HslV is capped on each side by a ring-shaped HslU homohexamer. The assembly of the HslU/HslV complex is dependent on binding of ATP.

It is found in the cytoplasm. Its function is as follows. ATPase subunit of a proteasome-like degradation complex; this subunit has chaperone activity. The binding of ATP and its subsequent hydrolysis by HslU are essential for unfolding of protein substrates subsequently hydrolyzed by HslV. HslU recognizes the N-terminal part of its protein substrates and unfolds these before they are guided to HslV for hydrolysis. This is ATP-dependent protease ATPase subunit HslU from Bordetella parapertussis (strain 12822 / ATCC BAA-587 / NCTC 13253).